The following is a 60-amino-acid chain: Large ribosomal subunit protein uL30 (60 aa).

The protein belongs to the universal ribosomal protein uL30 family. As to quaternary structure, part of the 50S ribosomal subunit.

The sequence is that of Large ribosomal subunit protein uL30 from Ralstonia pickettii (strain 12J).